Here is a 303-residue protein sequence, read N- to C-terminus: Taste receptor type 2 member 2 (303 aa).

Over 1–10 (MALSFSAILH) the chain is Extracellular. The chain crosses the membrane as a helical span at residues 11-31 (IIMMSAEFFTGITVNGFLIIV). Topologically, residues 32 to 56 (NCNELIKHRKLMPIQILLMCIGMSR) are cytoplasmic. Residues 57 to 77 (FGLQMVLMVQSFFSVFFPLLY) traverse the membrane as a helical segment. Residues 78–79 (VK) lie on the Extracellular side of the membrane. A helical transmembrane segment spans residues 80–100 (IIYGAAMMFLWMFFSSISLWF). The Cytoplasmic portion of the chain corresponds to 101-102 (AT). The helical transmembrane segment at 103-123 (CLSVFYCLKISGFTQSCFLWL) threads the bilayer. The Extracellular segment spans residues 124 to 129 (KFRIPK). The helical transmembrane segment at 130–150 (LIPWLLLGSVLASVSIASVCI) threads the bilayer. The Cytoplasmic portion of the chain corresponds to 151–185 (EVDYAKNVEEDALRNTTLKKSKTKIKKISEVLLVN). The helical transmembrane segment at 186–206 (LALIFPLAIFVMCTSMLLISL) threads the bilayer. At 207 to 234 (YKHTHRMQHGSHGFRNANTEAHINALKT) the chain is on the extracellular side. Residues 235 to 255 (VITFFCFFISYFAAFMTNMTF) traverse the membrane as a helical segment. Residues 256 to 277 (SLPYRSHQFFMLKDIMAAYPSG) lie on the Cytoplasmic side of the membrane.

The protein belongs to the G-protein coupled receptor T2R family.

The protein localises to the cell membrane. In terms of biological role, bitter taste receptor that detects natural and synthetic bitter compounds. The chain is Taste receptor type 2 member 2 from Homo sapiens (Human).